A 247-amino-acid chain; its full sequence is Fasciclin-like arabinogalactan protein 13 (247 aa).

A signal peptide spans 1 to 25; sequence MATTPLLLLLLTAVFLSTEITAQRA. Positions 34-179 constitute an FAS1 domain; the sequence is PINITAILEK…LAVYVVDMVL (146 aa). Residues Asn-36, Asn-55, Asn-68, Asn-141, and Asn-150 are each glycosylated (N-linked (GlcNAc...) asparagine). The interval 189-228 is disordered; sequence KISPMAPPPKSKSPDVSDDSESSKKAAAPSESEKSGSGEM. A lipid anchor (GPI-anchor amidated glycine) is attached at Gly-224. Residues 225-247 constitute a propeptide, removed in mature form; sequence SGEMNTGLGLGLGLVVLCLKFLL.

This sequence belongs to the fasciclin-like AGP family.

Its subcellular location is the cell membrane. In terms of biological role, may be a cell surface adhesion protein. The protein is Fasciclin-like arabinogalactan protein 13 (FLA13) of Arabidopsis thaliana (Mouse-ear cress).